A 142-amino-acid polypeptide reads, in one-letter code: Prefoldin subunit alpha (142 aa).

The protein belongs to the prefoldin subunit alpha family. As to quaternary structure, heterohexamer of two alpha and four beta subunits.

It localises to the cytoplasm. Its function is as follows. Molecular chaperone capable of stabilizing a range of proteins. Seems to fulfill an ATP-independent, HSP70-like function in archaeal de novo protein folding. The chain is Prefoldin subunit alpha from Methanosarcina acetivorans (strain ATCC 35395 / DSM 2834 / JCM 12185 / C2A).